We begin with the raw amino-acid sequence, 875 residues long: uncharacterized protein (875 aa).

This is an uncharacterized protein from Mycobacterium bovis (strain ATCC BAA-935 / AF2122/97).